A 567-amino-acid polypeptide reads, in one-letter code: 2-succinyl-5-enolpyruvyl-6-hydroxy-3-cyclohexene-1-carboxylate synthase (567 aa).

This sequence belongs to the TPP enzyme family. MenD subfamily. Homodimer. Mg(2+) serves as cofactor. Mn(2+) is required as a cofactor. It depends on thiamine diphosphate as a cofactor.

The catalysed reaction is isochorismate + 2-oxoglutarate + H(+) = 5-enolpyruvoyl-6-hydroxy-2-succinyl-cyclohex-3-ene-1-carboxylate + CO2. It participates in quinol/quinone metabolism; 1,4-dihydroxy-2-naphthoate biosynthesis; 1,4-dihydroxy-2-naphthoate from chorismate: step 2/7. It functions in the pathway quinol/quinone metabolism; menaquinone biosynthesis. Catalyzes the thiamine diphosphate-dependent decarboxylation of 2-oxoglutarate and the subsequent addition of the resulting succinic semialdehyde-thiamine pyrophosphate anion to isochorismate to yield 2-succinyl-5-enolpyruvyl-6-hydroxy-3-cyclohexene-1-carboxylate (SEPHCHC). This chain is 2-succinyl-5-enolpyruvyl-6-hydroxy-3-cyclohexene-1-carboxylate synthase, found in Yersinia pseudotuberculosis serotype I (strain IP32953).